Consider the following 398-residue polypeptide: Immunoglobulin heavy constant alpha 1 (398 aa).

Topologically, residues 1 to 364 are extracellular; sequence ASPTSPKVFP…TPGANLWPTT (364 aa). In terms of domain architecture, Ig-like 1 spans 6-98; the sequence is PKVFPLSLCS…HYTNPSQDVT (93 aa). 2 disulfides stabilise this stretch: Cys26–Cys85 and Cys77–Cys101. A disordered region spans residues 96 to 122; that stretch reads DVTVPCPVPSTPPTPSPSTPPTPSPSC. The segment covering 101-119 has biased composition (pro residues); that stretch reads CPVPSTPPTPSPSTPPTPS. Ser105 carries an O-linked (GalNAc...) serine glycan. O-linked (GalNAc...) threonine glycosylation is found at Thr106 and Thr109. O-linked (GalNAc...) serine glycans are attached at residues Ser111 and Ser113. Thr114 and Thr117 each carry an O-linked (GalNAc...) threonine glycan. Residues Ser119 and Ser121 are each glycosylated (O-linked (GalNAc...) serine). Disulfide bonds link Cys123–Cys180, Cys147–Cys204, and Cys250–Cys313. 2 consecutive Ig-like domains span residues 125–220 and 228–330; these read PRLS…ATLS and PEVH…KTID. Asn144 is a glycosylation site (N-linked (GlcNAc...) (complex) asparagine). Pro340 carries an N-linked (GlcNAc...) (complex) asparagine glycan. Glu352 contributes to the 3-hydroxy-L-kynurenine binding site. The chain crosses the membrane as a helical span at residues 365–383; sequence ITFLTLFLLSLFYSTALTV. The Cytoplasmic segment spans residues 384–398; sequence TSVRGPSGNREGPQY.

Immunoglobulins are composed of two identical heavy chains and two identical light chains; disulfide-linked. Monomeric or polymeric. Part of the secretory IgA (sIgA) complex that consists of two, four or five IgA monomers, and two additional non-Ig polypeptides, namely the JCHAIN and the secretory component (the proteolytic product of PIGR). In terms of processing, 3-Hydroxykynurenine, an oxidized tryptophan metabolite that is common in biological fluids, reacts with alpha-1-microglobulin to form heterogeneous polycyclic chromophores including hydroxanthommatin. The chromophore reacts with accessible cysteines forming non-reducible thioether cross-links with Ig alpha-1 chain C region Cys-352. N- and O-glycosylated. N-glycan at Asn-144: Hex5HexNAc4.

It is found in the secreted. The protein localises to the cell membrane. Constant region of immunoglobulin heavy chains. Immunoglobulins, also known as antibodies, are membrane-bound or secreted glycoproteins produced by B lymphocytes. In the recognition phase of humoral immunity, the membrane-bound immunoglobulins serve as receptors which, upon binding of a specific antigen, trigger the clonal expansion and differentiation of B lymphocytes into immunoglobulins-secreting plasma cells. Secreted immunoglobulins mediate the effector phase of humoral immunity, which results in the elimination of bound antigens. The antigen binding site is formed by the variable domain of one heavy chain, together with that of its associated light chain. Thus, each immunoglobulin has two antigen binding sites with remarkable affinity for a particular antigen. The variable domains are assembled by a process called V-(D)-J rearrangement and can then be subjected to somatic hypermutations which, after exposure to antigen and selection, allow affinity maturation for a particular antigen. Ig alpha is the major immunoglobulin class in body secretions. The polypeptide is Immunoglobulin heavy constant alpha 1 (Homo sapiens (Human)).